Consider the following 405-residue polypeptide: Indoleamine 2,3-dioxygenase acdA (405 aa).

Position 312 (histidine 312) interacts with heme.

This sequence belongs to the indoleamine 2,3-dioxygenase family. The cofactor is heme.

The catalysed reaction is L-tryptophan + O2 = N-formyl-L-kynurenine. It participates in secondary metabolite biosynthesis. Its function is as follows. Indoleamine 2,3-dioxygenase; part of the gene cluster that mediates the biosynthesis of aspcandine, a pyrrolobenzazepine alkaloid. Initially, the indoleamine 2,3-dioxygenase acdA accepts L-tryptophan and performs the oxidative opening of the indole ring to yield N'-formyl-L-kynurenine, which undergoes the spontaneous deformylation reaction to provide L-kynurenine. The kynurenine 3-monooxygenase acdD then hydroxylates L-kynurenine to afford 3-hydroxy-L-kynurenine. 3-hydroxy-L-kynurenine is activated by the A domain of the NRPS-PKS acdB and subsequently loaded onto the enzyme. The KS domain conducts the decarboxylative condensation of the 3-hydroxy-L-kynurenyl and malonyl moieties, and subsequent nucleophilic attacks by the two amino groups would occur nonenzymatically at two distinct positions, achieving the chain release and the construction of the tricyclic system. Finally, a dehydration reaction completes the biosynthesis to yield aspcandine. The sequence is that of Indoleamine 2,3-dioxygenase acdA from Aspergillus candidus.